The following is a 564-amino-acid chain: Phosphoinositide phospholipase C 3 (564 aa).

An EF-hand domain is found at 19 to 54 (TRQPPVSIKRLFEAYSRNGKMSFDELLRFVSEVQGE). The PI-PLC X-box domain occupies 106–250 (HDMKAPLSHY…LKGKILISTK (145 aa)). Active-site residues include histidine 121 and histidine 167. The PI-PLC Y-box domain occupies 296–412 (RDLIAIHAAN…GYVKKPRILL (117 aa)). In terms of domain architecture, C2 spans 406–539 (KKPRILLDEH…KSGVRAVRLH (134 aa)). Ca(2+)-binding residues include aspartate 450, aspartate 456, aspartate 509, aspartate 511, and aspartate 517.

Requires Ca(2+) as cofactor. As to expression, expressed in leaves, roots and siliques, but not in flowers.

The protein resides in the cell membrane. It catalyses the reaction a 1,2-diacyl-sn-glycero-3-phospho-(1D-myo-inositol-4,5-bisphosphate) + H2O = 1D-myo-inositol 1,4,5-trisphosphate + a 1,2-diacyl-sn-glycerol + H(+). In terms of biological role, the production of the second messenger molecules diacylglycerol (DAG) and inositol 1,4,5-trisphosphate (IP3) is mediated by activated phosphatidylinositol-specific phospholipase C enzymes. This chain is Phosphoinositide phospholipase C 3 (PLC3), found in Arabidopsis thaliana (Mouse-ear cress).